The sequence spans 323 residues: o-succinylbenzoate synthase (323 aa).

The active-site Proton donor is the Lys-134. Positions 162, 191, and 214 each coordinate Mg(2+). The active-site Proton acceptor is the Lys-236.

It belongs to the mandelate racemase/muconate lactonizing enzyme family. MenC type 1 subfamily. A divalent metal cation serves as cofactor.

The catalysed reaction is (1R,6R)-6-hydroxy-2-succinyl-cyclohexa-2,4-diene-1-carboxylate = 2-succinylbenzoate + H2O. The protein operates within quinol/quinone metabolism; 1,4-dihydroxy-2-naphthoate biosynthesis; 1,4-dihydroxy-2-naphthoate from chorismate: step 4/7. Its pathway is quinol/quinone metabolism; menaquinone biosynthesis. Converts 2-succinyl-6-hydroxy-2,4-cyclohexadiene-1-carboxylate (SHCHC) to 2-succinylbenzoate (OSB). The polypeptide is o-succinylbenzoate synthase (Yersinia pseudotuberculosis serotype IB (strain PB1/+)).